A 326-amino-acid polypeptide reads, in one-letter code: MIRAYEQNPQHFIEDLEKVRVEQLTGHGSSVLEELVQLVKDKNIDISIKYDPRKDSEVFANRVITDDIELLKKILAYFLPEDAILKGGHYDNQLQNGIKRVKEFLESSPNTQWELRAFMAVMHFSLTADRIDDDILKVIVDSMNHHGDARSKLREELAELTAELKIYSVIQAEINKHLSSSGTINIHDKSINLMDKNLYGYTDEEIFKASAEYKILEKMPQTTIQVDGSEKKIVSIKDFLGSENKRTGALGNLKNSYSYNKDNNELSHFATTCSDKSRPLNDLVSQKTTQLSDITSRFNSAIEALNRFIQKYDSVMQRLLDDTSGK.

It is found in the secreted. In terms of biological role, possibly involved in calcium regulation of YOP expression, which includes the export process. This is Virulence-associated V antigen (lcrV) from Yersinia pestis.